Consider the following 633-residue polypeptide: GRAM domain-containing protein 4 (633 aa).

Disordered stretches follow at residues 1 to 46 (MGIA…VRPR), 72 to 109 (LAES…AGPG), and 182 to 216 (VLKA…RSQG). Positions 27–39 (PWDKGLSGREPPR) are enriched in basic and acidic residues. Phosphoserine occurs at positions 75 and 79. The segment covering 95–104 (SPRDSEELRD) has biased composition (basic and acidic residues). The stretch at 134–190 (HLEIALLEKHFLQEELRKLREETNSEMLRQELDRERQRRIELEQKMQEVLKARSEEQ) forms a coiled coil. Residues 190 to 205 (QPAQPQQPPKGQSQAS) are compositionally biased toward low complexity. 3 helical membrane-spanning segments follow: residues 295-315 (VYMN…LAIL), 389-409 (TTQK…FFPY), and 411-431 (LVGL…DFIF). A GRAM domain is found at 500-578 (GNFHEIFNLT…MDITDIQKYK (79 aa)).

In terms of assembly, interacts with RTN4 (isoform B).

The protein localises to the mitochondrion membrane. It is found in the endoplasmic reticulum membrane. In terms of biological role, plays a role as a mediator of E2F1-induced apoptosis in the absence of p53/TP53. Inhibits TLR9 response to nucelic acids and regulates TLR9-mediated innate immune response. In Mus musculus (Mouse), this protein is GRAM domain-containing protein 4.